Reading from the N-terminus, the 698-residue chain is tRNA (guanine(37)-N(1))-methyltransferase (698 aa).

A disordered region spans residues 207–242 (SPPSVSLTENQDGDPQAQDSLRAVAAPPSPSSRKRG). S-adenosyl-L-methionine contacts are provided by residues His-427, 465–466 (DL), 494–495 (DG), and Asn-536.

The protein belongs to the class I-like SAM-binding methyltransferase superfamily. TRM5/TYW2 family. As to quaternary structure, monomer.

The protein localises to the mitochondrion matrix. The protein resides in the nucleus. It is found in the cytoplasm. It catalyses the reaction guanosine(37) in tRNA + S-adenosyl-L-methionine = N(1)-methylguanosine(37) in tRNA + S-adenosyl-L-homocysteine + H(+). Functionally, specifically methylates the N1 position of guanosine-37 in various cytoplasmic and mitochondrial tRNAs. Methylation is not dependent on the nature of the nucleoside 5' of the target nucleoside. This is the first step in the biosynthesis of wybutosine (yW), a modified base adjacent to the anticodon of tRNAs and required for accurate decoding. The protein is tRNA (guanine(37)-N(1))-methyltransferase of Leishmania braziliensis.